We begin with the raw amino-acid sequence, 906 residues long: NADH-quinone oxidoreductase subunit G (906 aa).

A 2Fe-2S ferredoxin-type domain is found at 2 to 83 (AKIYVDSKIY…GAIISIKSTE (82 aa)). 4 residues coordinate [2Fe-2S] cluster: C34, C45, C48, and C67. The region spanning 83–122 (ESEVFRSAIVELLLTNHPHDCPVCEEGGHCHLQDMTVMVK) is the 4Fe-4S His(Cys)3-ligated-type domain. Positions 99, 103, 106, 112, 151, 154, 157, 201, 228, 231, 235, and 263 each coordinate [4Fe-4S] cluster. Residues 221 to 277 (MQYAPGICHNCSVGCNISIGERYGEIRRIENRYHENINHYLICDLGRFGYSHTNLNT) form the 4Fe-4S Mo/W bis-MGD-type domain.

This sequence belongs to the complex I 75 kDa subunit family. In terms of assembly, composed of 13 different subunits. Subunits NuoCD, E, F, and G constitute the peripheral sector of the complex. The cofactor is [2Fe-2S] cluster. It depends on [4Fe-4S] cluster as a cofactor.

The catalysed reaction is a quinone + NADH + 5 H(+)(in) = a quinol + NAD(+) + 4 H(+)(out). Its function is as follows. NDH-1 shuttles electrons from NADH, via FMN and iron-sulfur (Fe-S) centers, to quinones in the respiratory chain. Couples the redox reaction to proton translocation (for every two electrons transferred, four hydrogen ions are translocated across the cytoplasmic membrane), and thus conserves the redox energy in a proton gradient. The polypeptide is NADH-quinone oxidoreductase subunit G (nuoG) (Buchnera aphidicola subsp. Acyrthosiphon pisum (strain APS) (Acyrthosiphon pisum symbiotic bacterium)).